The following is a 159-amino-acid chain: Large ribosomal subunit protein uL11 (159 aa).

Belongs to the universal ribosomal protein uL11 family. In terms of assembly, part of the ribosomal stalk of the 50S ribosomal subunit. Interacts with L10 and the large rRNA to form the base of the stalk. L10 forms an elongated spine to which L12 dimers bind in a sequential fashion forming a multimeric L10(L12)X complex.

Forms part of the ribosomal stalk which helps the ribosome interact with GTP-bound translation factors. The chain is Large ribosomal subunit protein uL11 from Methanococcus maripaludis (strain C5 / ATCC BAA-1333).